The following is a 568-amino-acid chain: Protein phosphatase 1 regulatory inhibitor subunit 16B (568 aa).

The stretch at 15–55 (EKVPTLERLRAAQKRRAQQLKKWAQYEQDLQHRKRKHERKR) forms a coiled coil. S69 is modified (phosphoserine). ANK repeat units lie at residues 100–129 (DGLT…NVNA), 133–162 (ELWT…DLLA), 228–257 (QGAT…RVDV), and 261–290 (DGWE…SLSA). Positions 327 to 346 (RHKSSLSRRTSSAGSRGKVV) are disordered. 3 positions are modified to phosphoserine: S333, S337, and S350. Residues 333-342 (SRRTSSAGSR) are compositionally biased toward low complexity. A disordered region spans residues 373–404 (SASEDQRNSTYNGDIRETRTDQENKDPNPRLE). Over residues 386 to 404 (DIRETRTDQENKDPNPRLE) the composition is skewed to basic and acidic residues. S477 carries the post-translational modification Phosphoserine. Residues 504–525 (GSGVSRTGEGSSEGKAPLIGGR) form a disordered region. One copy of the ANK 5 repeat lies at 531–560 (SNGTSVYYTVTSGDPPLLKFKAPIEEMEEK). C564 carries the S-palmitoyl cysteine lipid modification. C565 is modified (cysteine methyl ester). C565 carries the S-farnesyl cysteine lipid modification. The propeptide at 566-568 (RIS) is removed in mature form.

Interacts with PPP1CA, PPP1CB and MSN. Interacts (via its fourth ankyrin repeat) with the mature dimeric form of RPSA/LAMR1. Interacts with EEF1A1. Interacts with PTEN. Interacts with ECE1. In terms of processing, phosphorylated by PKA and, after PKA priming, by GSK3B. Phosphorylation by GSK3B reduces its association with PP1C and enhances PP1C activity. Dephosphorylation by its associated PP1C results in enhanced association with PP1C, but reduced PP1C activity.

The protein localises to the cell membrane. Its subcellular location is the nucleus. It is found in the cell projection. Its function is as follows. Regulator of protein phosphatase 1 (PP1) that acts as a positive regulator of pulmonary endothelial cell (EC) barrier function. Protects the endothelial barrier from lipopolysaccharide (LPS)-induced vascular leakage. Involved in the regulation of the PI3K/AKT signaling pathway. Involved in the regulation of angiogenesis and endothelial cell proliferation through the control of ECE1 dephosphorylation, trafficking and activity. Involved in the regulation of endothelial cell filopodia extension. May be a downstream target for TGF-beta1 signaling cascade in endothelial cells. Involved in PKA-mediated moesin dephosphorylation which is important in EC barrier protection against thrombin stimulation. Promotes the interaction of PPP1CA with RPSA/LAMR1 and in turn facilitates the dephosphorylation of RPSA/LAMR1. Involved in the dephosphorylation of EEF1A1. The polypeptide is Protein phosphatase 1 regulatory inhibitor subunit 16B (PPP1R16B) (Bos taurus (Bovine)).